Here is a 355-residue protein sequence, read N- to C-terminus: Ubiquinone biosynthesis protein COQ4 homolog, mitochondrial (355 aa).

Residues H134, D135, H138, and E150 each contribute to the Zn(2+) site.

Belongs to the COQ4 family. Component of a multi-subunit COQ enzyme complex. Zn(2+) is required as a cofactor.

It is found in the mitochondrion inner membrane. It carries out the reaction a 4-hydroxy-3-methoxy-5-(all-trans-polyprenyl)benzoate + H(+) = a 2-methoxy-6-(all-trans-polyprenyl)phenol + CO2. It functions in the pathway cofactor biosynthesis; ubiquinone biosynthesis. Its function is as follows. Lyase that catalyzes the C1-decarboxylation of 4-hydroxy-3-methoxy-5-(all-trans-polyprenyl)benzoic acid into 2-methoxy-6-(all-trans-polyprenyl)phenol during ubiquinone biosynthesis. The protein is Ubiquinone biosynthesis protein COQ4 homolog, mitochondrial of Plasmodium chabaudi chabaudi.